Here is a 1079-residue protein sequence, read N- to C-terminus: Translation initiation factor IF-2 (1079 aa).

Basic and acidic residues-rich tracts occupy residues 52–65, 75–90, and 102–134; these read VQAQ…KEGN, RDGD…KAPE, and APER…KEPQ. The interval 52–488 is disordered; that stretch reads VQAQRDGGAR…RGKKDVRPAA (437 aa). Low complexity predominate over residues 150–184; that stretch reads APVAKVVEAAPAETPAPEAPAVKATVTAEAAPAKT. The span at 185–194 shows a compositional bias: basic and acidic residues; it reads VEPESERPQA. Over residues 276 to 291 the composition is skewed to low complexity; the sequence is AAVAQQQMQQQAAQQQ. Residues 306–327 are compositionally biased toward basic and acidic residues; that stretch reads GGYRPEGQREGGYRPEGQREGG. 2 stretches are compositionally biased toward low complexity: residues 348 to 370 and 380 to 398; these read EGGY…GPRP and PGAP…APRP. Residues 419–429 show a composition bias toward gly residues; sequence PRPGGFGGAPG. Positions 461–471 are enriched in basic and acidic residues; it reads PRGRSDDDVMR. Basic residues predominate over residues 473–482; that stretch reads PRGRGKRGKK. Residues 578 to 745 form the tr-type G domain; it reads TRPPVVTIMG…LIAIQAEILE (168 aa). The interval 587–594 is G1; that stretch reads GHVDHGKT. GTP is bound at residue 587–594; sequence GHVDHGKT. The interval 612-616 is G2; sequence GITQH. Positions 633 to 636 are G3; sequence DTPG. Residues 633–637 and 687–690 contribute to the GTP site; these read DTPGH and NKMD. The G4 stretch occupies residues 687–690; that stretch reads NKMD. Residues 723 to 725 form a G5 region; that stretch reads SAK.

Belongs to the TRAFAC class translation factor GTPase superfamily. Classic translation factor GTPase family. IF-2 subfamily.

The protein localises to the cytoplasm. One of the essential components for the initiation of protein synthesis. Protects formylmethionyl-tRNA from spontaneous hydrolysis and promotes its binding to the 30S ribosomal subunits. Also involved in the hydrolysis of GTP during the formation of the 70S ribosomal complex. The protein is Translation initiation factor IF-2 of Nitratidesulfovibrio vulgaris (strain DP4) (Desulfovibrio vulgaris).